The chain runs to 445 residues: Meiosis-specific serine/threonine-protein kinase mek1 (445 aa).

The FHA domain occupies 62–116 (VSVGRSNTCNYQLLQFTASYKHFRVYSVLIDDDMDPLVYCEDQSSNGTFLNHRLI). The region spanning 160-421 (NITQRLLGIG…VKQCLSHPWF (262 aa)) is the Protein kinase domain. Residues 166–174 (LGIGGFSRI) and K189 each bind ATP. Residue D281 is the Proton acceptor of the active site.

The protein belongs to the protein kinase superfamily. CAMK Ser/Thr protein kinase family. CHEK2 subfamily.

The catalysed reaction is L-seryl-[protein] + ATP = O-phospho-L-seryl-[protein] + ADP + H(+). It catalyses the reaction L-threonyl-[protein] + ATP = O-phospho-L-threonyl-[protein] + ADP + H(+). Functionally, probable protein kinase required for meiotic recombination. The chain is Meiosis-specific serine/threonine-protein kinase mek1 (mek1) from Schizosaccharomyces pombe (strain 972 / ATCC 24843) (Fission yeast).